A 436-amino-acid chain; its full sequence is AMSH-like protease (436 aa).

Met1 bears the N-acetylmethionine mark. A phosphoserine mark is found at Ser25 and Ser242. Positions 269 to 397 (VVLSRDLCHK…IFRLTNAGML (129 aa)) constitute an MPN domain. Zn(2+)-binding residues include His347, His349, Asp360, His362, Cys402, His408, and His410. The JAMM motif motif lies at 347–360 (HTHPTQTAFLSSVD).

This sequence belongs to the peptidase M67C family. Zn(2+) is required as a cofactor. In terms of tissue distribution, ubiquitously expressed. Isoform 1 is widely expressed while isoform 2 is testis-specific.

Zinc metalloprotease that specifically cleaves 'Lys-63'-linked polyubiquitin chains. Acts as a positive regulator of the TORC1 signaling pathway by mediating 'Lys-63'-linked deubiquitination of SESN2, thereby inhibiting SESN2-interaction with the GATOR2 complex. Does not cleave 'Lys-48'-linked polyubiquitin chains. The sequence is that of AMSH-like protease (Stambpl1) from Mus musculus (Mouse).